A 601-amino-acid polypeptide reads, in one-letter code: Keratin, type II cytoskeletal 5 (601 aa).

The segment at 1 to 168 (MSRQSTVSFR…DPTIQRVRTE (168 aa)) is head. 4 positions are modified to phosphoserine: S5, S8, S16, and S21. Residue T24 is modified to Phosphothreonine; by CDK1. Phosphoserine is present on residues S26, S36, S50, S64, S71, and S75. Position 152 is a phosphothreonine; by CDK1 (T152). Position 167 is a phosphothreonine; by AURKB (T167). The interval 169–204 (EREQIKTLNNKFASFIDKVRFLEQQNKVLDTKWALL) is coil 1A. The IF rod domain maps to 169 to 482 (EREQIKTLNN…KLLEGEECRL (314 aa)). Positions 205–223 (QEQGTKTVRQNLEPLLEQY) are linker 1. A coil 1B region spans residues 224–316 (INNLRRQLDG…FFDAELSQMQ (93 aa)). Positions 317-339 (THVSDTSVVLSMDNNRSLDLDSI) are linker 12. The tract at residues 340–478 (IAEVKAQYED…ATYRKLLEGE (139 aa)) is coil 2. A tail region spans residues 479–601 (ECRLSGEGVG…TSSSRKSFKS (123 aa)). The segment at 576-601 (FGSGGGSSSSVKFVSTTSSSRKSFKS) is disordered. Residues 583–601 (SSSVKFVSTTSSSRKSFKS) are compositionally biased toward low complexity.

Belongs to the intermediate filament family. Heterodimer of a type I and a type II keratin. Heterodimer with type I keratin KRT25 leading to the formation of keratin intermediate filament (KIF) network. Forms a heterodimer (via 2B domains) with KRT14 (via 2B domains). Interacts with TCHP. Interacts with EPPK1. Interacts with AMELX. Interacts with PKP1 (via N-terminus) and PKP2. Phosphorylated by CDK1, AURKB and Rho-kinase, phosphorylation is regulated by the cell cycle. Thr-24 phosphorylation, mediated by CDK1, peaks during prometaphase or metaphase cells with phosphorylated filamentous structures evident throughout the cytoplasm early mitosis. CDK1 phosphorylates Thr-24 in mitotic cells at the site of injury. Post-translationally, O-glycosylated.

The protein localises to the cytoplasm. In terms of biological role, required for the formation of keratin intermediate filaments in the basal epidermis and maintenance of the skin barrier in response to mechanical stress. Regulates the recruitment of Langerhans cells to the epidermis, potentially by modulation of the abundance of macrophage chemotactic cytokines, macrophage inflammatory cytokines and CTNND1 localization in keratinocytes. In Bos taurus (Bovine), this protein is Keratin, type II cytoskeletal 5.